We begin with the raw amino-acid sequence, 130 residues long: Small ribosomal subunit protein uS9 (130 aa).

The tract at residues Arg-109–Arg-130 is disordered.

The protein belongs to the universal ribosomal protein uS9 family.

This chain is Small ribosomal subunit protein uS9, found in Desulfotalea psychrophila (strain LSv54 / DSM 12343).